Reading from the N-terminus, the 148-residue chain is Large-conductance mechanosensitive channel (148 aa).

2 consecutive transmembrane segments (helical) span residues 9–29 and 79–99; these read AFAVKGNVVDMAVGIIIGAAF and IQTVIDFIIVAFAIFMGVKAI.

It belongs to the MscL family. As to quaternary structure, homopentamer.

Its subcellular location is the cell inner membrane. In terms of biological role, channel that opens in response to stretch forces in the membrane lipid bilayer. May participate in the regulation of osmotic pressure changes within the cell. This chain is Large-conductance mechanosensitive channel, found in Pseudomonas savastanoi pv. phaseolicola (strain 1448A / Race 6) (Pseudomonas syringae pv. phaseolicola (strain 1448A / Race 6)).